Consider the following 208-residue polypeptide: Probable GTP-binding protein EngB (208 aa).

The region spanning 22–195 (GLPEIALAGR…WGALEDIFVE (174 aa)) is the EngB-type G domain. GTP-binding positions include 30 to 37 (GRSNVGKS), 57 to 61 (GKTRT), 75 to 78 (DLPG), 142 to 145 (TKSD), and 174 to 176 (ISS). Mg(2+) contacts are provided by serine 37 and threonine 59.

This sequence belongs to the TRAFAC class TrmE-Era-EngA-EngB-Septin-like GTPase superfamily. EngB GTPase family. Requires Mg(2+) as cofactor.

Its function is as follows. Necessary for normal cell division and for the maintenance of normal septation. This is Probable GTP-binding protein EngB from Alkaliphilus metalliredigens (strain QYMF).